Consider the following 198-residue polypeptide: Probable chorismate pyruvate-lyase (198 aa).

Residues Arg-73, Leu-111, and Glu-172 each coordinate substrate.

Belongs to the UbiC family.

The protein localises to the cytoplasm. It carries out the reaction chorismate = 4-hydroxybenzoate + pyruvate. Its pathway is cofactor biosynthesis; ubiquinone biosynthesis. Its function is as follows. Removes the pyruvyl group from chorismate, with concomitant aromatization of the ring, to provide 4-hydroxybenzoate (4HB) for the ubiquinone pathway. This Burkholderia lata (strain ATCC 17760 / DSM 23089 / LMG 22485 / NCIMB 9086 / R18194 / 383) protein is Probable chorismate pyruvate-lyase.